The primary structure comprises 497 residues: Cobyric acid synthase (497 aa).

The 175-residue stretch at 257-431 (WLRVAAVRLP…WHGLLDNDDF (175 aa)) folds into the GATase cobBQ-type domain. Cys338 (nucleophile) is an active-site residue. His423 is an active-site residue.

Belongs to the CobB/CobQ family. CobQ subfamily.

Its pathway is cofactor biosynthesis; adenosylcobalamin biosynthesis. Functionally, catalyzes amidations at positions B, D, E, and G on adenosylcobyrinic A,C-diamide. NH(2) groups are provided by glutamine, and one molecule of ATP is hydrogenolyzed for each amidation. The chain is Cobyric acid synthase from Mycolicibacterium paratuberculosis (strain ATCC BAA-968 / K-10) (Mycobacterium paratuberculosis).